Reading from the N-terminus, the 390-residue chain is Putative gustatory receptor 59d (390 aa).

At 1–38 (MADLLKLCLRIAYAYGRLTGVINFKIDLKTGQALVTRG) the chain is on the cytoplasmic side. The chain crosses the membrane as a helical span at residues 39 to 59 (ATLISVSTHLLIFALLLYQTM). At 60–75 (RKSVVNVMWKYANSLH) the chain is on the extracellular side. Residues 76 to 96 (EYVFLVIAGFRVVCVFLELVS) form a helical membrane-spanning segment. Residues 97–128 (RWSQRRTFVRLFNSFRRLYQRNPDIIQYCRRS) lie on the Cytoplasmic side of the membrane. The helical transmembrane segment at 129–149 (IVSKFFCVTMTETLHIIVTLA) threads the bilayer. Topologically, residues 150–156 (MMRNRLS) are extracellular. Residues 157–177 (IALALRIWAVLSLTAIINVII) form a helical membrane-spanning segment. The Cytoplasmic portion of the chain corresponds to 178-252 (TQYYVATACV…NLSTAYEGEV (75 aa)). Residues 253–273 (VCLVITYYLNMLGTSYLLFSI) form a helical membrane-spanning segment. The Extracellular segment spans residues 274 to 283 (SKYGNFGNNL). The helical transmembrane segment at 284–304 (LVIITLCGIVYFVFYVVDCWI) threads the bilayer. At 305–366 (NAFNVFYLLD…MYGLFEFGRG (62 aa)) the chain is on the cytoplasmic side. The chain crosses the membrane as a helical span at residues 367–383 (TSFAVFNSLLTHSLLLI). Residues 384-390 (QYDVQNF) lie on the Extracellular side of the membrane.

Belongs to the insect chemoreceptor superfamily. Gustatory receptor (GR) family. Gr22e subfamily. Expressed in the adult labellar chemosensory neurons. In larvae, is expressed in neurons of the terminal external chemosensory organ as well as in the dorsal pharyngeal sense organ.

It is found in the cell membrane. Functionally, probable gustatory receptor which mediates acceptance or avoidance behavior, depending on its substrates. The protein is Putative gustatory receptor 59d (Gr59d) of Drosophila melanogaster (Fruit fly).